The following is a 79-amino-acid chain: Protein SIP18 (79 aa).

The interval 1 to 79 (MSNMMNKFAE…DWKTYENMKK (79 aa)) is disordered. Basic and acidic residues predominate over residues 8–20 (FAEKLQGNDDSHQ).

The protein is Protein SIP18 (SIP18) of Saccharomyces cerevisiae (strain ATCC 204508 / S288c) (Baker's yeast).